The sequence spans 513 residues: GMP synthase [glutamine-hydrolyzing] (513 aa).

In terms of domain architecture, Glutamine amidotransferase type-1 spans 8–198 (KIIVLDYGSQ…ALNICGAKGN (191 aa)). Catalysis depends on Cys85, which acts as the Nucleophile. Residues His172 and Glu174 contribute to the active site. In terms of domain architecture, GMPS ATP-PPase spans 199–388 (WSMENFIDMQ…LGMPDEIVWR (190 aa)). An ATP-binding site is contributed by 226 to 232 (SGGVDSS).

As to quaternary structure, homodimer.

It catalyses the reaction XMP + L-glutamine + ATP + H2O = GMP + L-glutamate + AMP + diphosphate + 2 H(+). The protein operates within purine metabolism; GMP biosynthesis; GMP from XMP (L-Gln route): step 1/1. In terms of biological role, catalyzes the synthesis of GMP from XMP. This chain is GMP synthase [glutamine-hydrolyzing] (guaA), found in Lactococcus lactis subsp. lactis (strain IL1403) (Streptococcus lactis).